The primary structure comprises 249 residues: Small ribosomal subunit protein uS2 (249 aa).

This sequence belongs to the universal ribosomal protein uS2 family.

The polypeptide is Small ribosomal subunit protein uS2 (Acinetobacter baylyi (strain ATCC 33305 / BD413 / ADP1)).